Reading from the N-terminus, the 94-residue chain is MLEVNTYFDGTVKSIAFQTATLPATVGVMAKGEYTFGTDCKEIMTVVSGELIVQLPNQEEWQTFIDGQTFEVEANQSFNLKVPVETAYLCKYIR.

Belongs to the nucleoside phosphorylase PpnP family.

The catalysed reaction is a purine D-ribonucleoside + phosphate = a purine nucleobase + alpha-D-ribose 1-phosphate. It catalyses the reaction adenosine + phosphate = alpha-D-ribose 1-phosphate + adenine. It carries out the reaction cytidine + phosphate = cytosine + alpha-D-ribose 1-phosphate. The enzyme catalyses guanosine + phosphate = alpha-D-ribose 1-phosphate + guanine. The catalysed reaction is inosine + phosphate = alpha-D-ribose 1-phosphate + hypoxanthine. It catalyses the reaction thymidine + phosphate = 2-deoxy-alpha-D-ribose 1-phosphate + thymine. It carries out the reaction uridine + phosphate = alpha-D-ribose 1-phosphate + uracil. The enzyme catalyses xanthosine + phosphate = alpha-D-ribose 1-phosphate + xanthine. Functionally, catalyzes the phosphorolysis of diverse nucleosides, yielding D-ribose 1-phosphate and the respective free bases. Can use uridine, adenosine, guanosine, cytidine, thymidine, inosine and xanthosine as substrates. Also catalyzes the reverse reactions. The protein is Pyrimidine/purine nucleoside phosphorylase of Saccharophagus degradans (strain 2-40 / ATCC 43961 / DSM 17024).